A 55-amino-acid chain; its full sequence is Large ribosomal subunit protein bL32 (55 aa).

Over residues Met-1 to Gln-19 the composition is skewed to basic residues. The interval Met-1–Ala-22 is disordered.

The protein belongs to the bacterial ribosomal protein bL32 family.

The protein is Large ribosomal subunit protein bL32 of Corynebacterium urealyticum (strain ATCC 43042 / DSM 7109).